We begin with the raw amino-acid sequence, 4579 residues long: Sacsin (4579 aa).

Positions 9-84 constitute a Ubiquitin-like domain; it reads VPVTVLPGCV…FVNLQSKGLK (76 aa). Lysine 943 is modified (N6-acetyllysine). Serine 1779 and serine 2511 each carry phosphoserine. Threonine 2516 carries the phosphothreonine modification. Phosphoserine is present on serine 3435. Disordered regions lie at residues 4248-4273 and 4279-4298; these read PEES…TPGL and LFSG…PKKL. A compositionally biased stretch (polar residues) spans 4254–4267; sequence SRDSAPSTPTSPTE. Threonine 4261 is modified (phosphothreonine). Serine 4264 carries the phosphoserine modification. Positions 4288–4298 are enriched in basic residues; that stretch reads TSSKHQSPKKL. The 88-residue stretch at 4306 to 4393 folds into the J domain; the sequence is ILKEVTSVVE…ASRFQSDKYS (88 aa). The disordered stretch occupies residues 4405–4427; sequence ATSHKSERQQQNKEKCPPSAGQT. Over residues 4406 to 4420 the composition is skewed to basic and acidic residues; the sequence is TSHKSERQQQNKEKC. One can recognise an HEPN domain in the interval 4451–4567; that stretch reads LRQARANFSA…MRVMECTACI (117 aa).

As to expression, highly expressed in the central nervous system. Also found in skeletal muscle and at low levels in pancreas.

Its subcellular location is the cytoplasm. Its function is as follows. Co-chaperone which acts as a regulator of the Hsp70 chaperone machinery and may be involved in the processing of other ataxia-linked proteins. The chain is Sacsin (SACS) from Homo sapiens (Human).